The primary structure comprises 250 residues: Small ribosomal subunit protein uS2 (250 aa).

Belongs to the universal ribosomal protein uS2 family.

This Chloroherpeton thalassium (strain ATCC 35110 / GB-78) protein is Small ribosomal subunit protein uS2.